A 388-amino-acid polypeptide reads, in one-letter code: Processive diacylglycerol beta-glucosyltransferase (388 aa).

Belongs to the glycosyltransferase 28 family. UgtP subfamily.

It is found in the cell membrane. It catalyses the reaction a 1,2-diacyl-3-O-(beta-D-glucopyranosyl)-sn-glycerol + UDP-alpha-D-glucose = a 1,2-diacyl-3-O-(beta-D-Glc-(1-&gt;6)-beta-D-Glc)-sn-glycerol + UDP + H(+). The enzyme catalyses a 1,2-diacyl-3-O-(beta-D-Glc-(1-&gt;6)-beta-D-Glc)-sn-glycerol + UDP-alpha-D-glucose = a 1,2-diacyl-3-O-(beta-D-Glc-(1-&gt;6)-beta-D-Glc-(1-&gt;6)-beta-D-Glc)-sn-glycerol + UDP + H(+). It carries out the reaction a 1,2-diacyl-sn-glycerol + UDP-alpha-D-glucose = a 1,2-diacyl-3-O-(beta-D-glucopyranosyl)-sn-glycerol + UDP + H(+). It participates in glycolipid metabolism; diglucosyl-diacylglycerol biosynthesis. Functionally, processive glucosyltransferase involved in the biosynthesis of both the bilayer- and non-bilayer-forming membrane glucolipids. Is able to successively transfer up to three glucosyl residues to diacylglycerol (DAG), thereby catalyzing the formation of beta-monoglucosyl-DAG (3-O-(beta-D-glucopyranosyl)-1,2-diacyl-sn-glycerol), beta-diglucosyl-DAG (3-O-(beta-D-glucopyranosyl-beta-(1-&gt;6)-D-glucopyranosyl)-1,2-diacyl-sn-glycerol) and beta-triglucosyl-DAG (3-O-(beta-D-glucopyranosyl-beta-(1-&gt;6)-D-glucopyranosyl-beta-(1-&gt;6)-D-glucopyranosyl)-1,2-diacyl-sn-glycerol). Beta-diglucosyl-DAG is the predominant glycolipid found in Bacillales and is also used as a membrane anchor for lipoteichoic acid (LTA). The polypeptide is Processive diacylglycerol beta-glucosyltransferase (Bacillus mycoides (strain KBAB4) (Bacillus weihenstephanensis)).